A 396-amino-acid polypeptide reads, in one-letter code: Elongation factor Tu (396 aa).

A tr-type G domain is found at 10 to 206 (KPHVNIGTIG…AVDESVPEPV (197 aa)). The interval 19-26 (GHVDHGKT) is G1. Residue 19 to 26 (GHVDHGKT) participates in GTP binding. Thr26 lines the Mg(2+) pocket. Positions 62–66 (GITIN) are G2. Positions 83-86 (DAPG) are G3. Residues 83-87 (DAPGH) and 138-141 (NKSD) contribute to the GTP site. The segment at 138 to 141 (NKSD) is G4. The segment at 176 to 178 (SGL) is G5.

The protein belongs to the TRAFAC class translation factor GTPase superfamily. Classic translation factor GTPase family. EF-Tu/EF-1A subfamily. In terms of assembly, monomer.

The protein resides in the cytoplasm. The enzyme catalyses GTP + H2O = GDP + phosphate + H(+). Functionally, GTP hydrolase that promotes the GTP-dependent binding of aminoacyl-tRNA to the A-site of ribosomes during protein biosynthesis. This chain is Elongation factor Tu, found in Beutenbergia cavernae (strain ATCC BAA-8 / DSM 12333 / CCUG 43141 / JCM 11478 / NBRC 16432 / NCIMB 13614 / HKI 0122).